The primary structure comprises 463 residues: Histone acetyltransferase mst1 (463 aa).

The 53-residue stretch at 22-74 (VYKSKVFAFKDGEYRKAEILMIQKRTRGVVYYVHYNDYNKRLDEWITIDNIDL) folds into the Tudor-knot domain. The interval 76 to 145 (KGIEYPPPEK…GSNAGNESLP (70 aa)) is disordered. Residues 87–99 (KKAHGKGKSSKRP) show a composition bias toward basic residues. Residues 111–121 (PSKTEPSTPST) show a composition bias toward low complexity. One can recognise an MYST-type HAT domain in the interval 179–451 (ARIRNINKIC…NGDLLADWQP (273 aa)). The C2HC MYST-type zinc finger occupies 212 to 237 (VYICSFCFCYYGSERQFQRHREKCTL). The ESA1-RPD3 motif motif lies at 262 to 283 (RTWCRNICLLSKLFLDHKMLYY). Lys-279 is subject to N6-acetyllysine; by autocatalysis. Acetyl-CoA contacts are provided by residues 320 to 324 (ACILT) and 329 to 335 (QRHGYGK). Glu-355 (proton donor/acceptor) is an active-site residue. Ser-359 contacts acetyl-CoA.

The protein belongs to the MYST (SAS/MOZ) family. As to quaternary structure, component of the NuA4 histone acetyltransferase complex. Interacts with arp4. Autoacetylation at Lys-279 is required for proper function.

The protein resides in the nucleus. It localises to the chromosome. The catalysed reaction is L-lysyl-[histone] + acetyl-CoA = N(6)-acetyl-L-lysyl-[histone] + CoA + H(+). The enzyme catalyses L-lysyl-[protein] + acetyl-CoA = N(6)-acetyl-L-lysyl-[protein] + CoA + H(+). It carries out the reaction 2-hydroxyisobutanoyl-CoA + L-lysyl-[protein] = N(6)-(2-hydroxyisobutanoyl)-L-lysyl-[protein] + CoA + H(+). It catalyses the reaction (2E)-butenoyl-CoA + L-lysyl-[protein] = N(6)-(2E)-butenoyl-L-lysyl-[protein] + CoA + H(+). Catalytic component of the NuA4 histone acetyltransferase (HAT) complex which is involved in epigenetic transcriptional activation of selected genes principally by acetylation of nucleosomal histones H4, H3, H2B, H2A and H2A variant H2A.Z. Acetylates histone H4 to form H4K5ac, H4K8ac, H4K12ac and H4K16ac, histone H3 to form H3K14ac, and histone H2A to form H2AK4ac and H2AK7ac. The NuA4 complex is involved in the DNA damage response and is required for chromosome segregation. The NuA4 complex plays a direct role in repair of DNA double-strand breaks (DSBs) through homologous recombination. Recruitment to promoters depends on H3K4me. Also acetylates non-histone proteins. In addition to protein acetyltransferase, can use different acyl-CoA substrates, such as 2-hydroxyisobutanoyl-CoA (2-hydroxyisobutyryl-CoA) or (2E)-butenoyl-CoA (crotonyl-CoA), and is able to mediate protein 2-hydroxyisobutyrylation and crotonylation, respectively. The protein is Histone acetyltransferase mst1 of Schizosaccharomyces pombe (strain 972 / ATCC 24843) (Fission yeast).